Reading from the N-terminus, the 275-residue chain is Two-component response regulator PprB (275 aa).

In terms of domain architecture, Response regulatory spans 10-128; the sequence is SVLIIDDEPQ…ELLHGLERLE (119 aa). Residue aspartate 60 is modified to 4-aspartylphosphate. The segment at 173–205 is disordered; the sequence is SQPSALRSEDSQPSAPPAPVAESQVSPSNPLFG. An HTH luxR-type domain is found at 200–265; sequence SNPLFGKLSP…QLALALSPAA (66 aa). Residues 224 to 243 constitute a DNA-binding region (H-T-H motif); that stretch reads NYQIAYELGITENTVKLYVS.

In terms of processing, phosphorylated by PprA.

Member of the two-component regulatory system PprA/PprB involved in biofilm formation by controlling the expression of many related genes including type IVb pili major subunit flp pilin, adhesin bapA or cupE fimbriae. Functions as a transcription regulator by direct binding to promoter regions. Negatively regulates its own transcription. This is Two-component response regulator PprB from Pseudomonas aeruginosa (strain ATCC 15692 / DSM 22644 / CIP 104116 / JCM 14847 / LMG 12228 / 1C / PRS 101 / PAO1).